The following is a 476-amino-acid chain: Beta-amyrin 28-monooxygenase (476 aa).

A helical transmembrane segment spans residues 2-22 (ELLYVCLVCVFVFLVSLLLLY). Residue C421 participates in heme binding.

It belongs to the cytochrome P450 family. Heme serves as cofactor. As to expression, specifically expressed in roots.

The protein localises to the membrane. The enzyme catalyses beta-amyrin + 3 reduced [NADPH--hemoprotein reductase] + 3 O2 = oleanolate + 3 oxidized [NADPH--hemoprotein reductase] + 4 H2O + 4 H(+). Its function is as follows. Catalyzes the carboxylation of beta-amyrin at the C-28 position to form oleanolate. Catalyzes the carboxylation of alpha-amyrin at the C-28 position to form ursolate. This Solanum lycopersicum (Tomato) protein is Beta-amyrin 28-monooxygenase (CYP716A44).